The following is a 211-amino-acid chain: Putative ankyrin repeat protein R810 (211 aa).

ANK repeat units lie at residues 31–61, 72–101, 103–131, 133–162, and 163–191; these read TKFI…NLKY, NIND…DICA, QNSP…KFFG, YSSA…FCLE, and MEIA…SYFD.

This Acanthamoeba polyphaga mimivirus (APMV) protein is Putative ankyrin repeat protein R810.